The chain runs to 128 residues: S-protein homolog 5 (128 aa).

Residues 1 to 20 form the signal peptide; that stretch reads MEKVSIVCFFFFLLFGSGYG.

It belongs to the plant self-incompatibility (S1) protein family.

It localises to the secreted. This Arabidopsis thaliana (Mouse-ear cress) protein is S-protein homolog 5.